A 476-amino-acid chain; its full sequence is Bifunctional protein HldE (476 aa).

The segment at 1 to 319 (MKVSLPAFEK…EALALHHGES (319 aa)) is ribokinase. Residue 195–198 (NMSE) coordinates ATP. Residue Asp264 is part of the active site. The cytidylyltransferase stretch occupies residues 345 to 476 (MTNGCFDILH…AIIQNIMANQ (132 aa)).

In the N-terminal section; belongs to the carbohydrate kinase PfkB family. The protein in the C-terminal section; belongs to the cytidylyltransferase family. As to quaternary structure, homodimer.

It carries out the reaction D-glycero-beta-D-manno-heptose 7-phosphate + ATP = D-glycero-beta-D-manno-heptose 1,7-bisphosphate + ADP + H(+). It catalyses the reaction D-glycero-beta-D-manno-heptose 1-phosphate + ATP + H(+) = ADP-D-glycero-beta-D-manno-heptose + diphosphate. It functions in the pathway nucleotide-sugar biosynthesis; ADP-L-glycero-beta-D-manno-heptose biosynthesis; ADP-L-glycero-beta-D-manno-heptose from D-glycero-beta-D-manno-heptose 7-phosphate: step 1/4. The protein operates within nucleotide-sugar biosynthesis; ADP-L-glycero-beta-D-manno-heptose biosynthesis; ADP-L-glycero-beta-D-manno-heptose from D-glycero-beta-D-manno-heptose 7-phosphate: step 3/4. In terms of biological role, catalyzes the phosphorylation of D-glycero-D-manno-heptose 7-phosphate at the C-1 position to selectively form D-glycero-beta-D-manno-heptose-1,7-bisphosphate. Its function is as follows. Catalyzes the ADP transfer from ATP to D-glycero-beta-D-manno-heptose 1-phosphate, yielding ADP-D-glycero-beta-D-manno-heptose. This is Bifunctional protein HldE from Shewanella baltica (strain OS155 / ATCC BAA-1091).